A 121-amino-acid chain; its full sequence is Flagellar protein FliT (121 aa).

A required for homodimerization region spans residues 1-50 (MNHAPHLYFAWQQLVEKSQLMLRLATEEQWDELIASEMAYVNAVQEIAHL). Residues 60–98 (MQEQLRPMLRLILDNESKVKQLLQIRMDELAKLVGQSSV) are fliD binding.

Belongs to the FliT family. Homodimer. Interacts with FliD and FlhC.

Its subcellular location is the cytoplasm. The protein localises to the cytosol. In terms of biological role, dual-function protein that regulates the transcription of class 2 flagellar operons and that also acts as an export chaperone for the filament-capping protein FliD. As a transcriptional regulator, acts as an anti-FlhDC factor; it directly binds FlhC, thus inhibiting the binding of the FlhC/FlhD complex to class 2 promoters, resulting in decreased expression of class 2 flagellar operons. As a chaperone, effects FliD transition to the membrane by preventing its premature polymerization, and by directing it to the export apparatus. In Escherichia coli O139:H28 (strain E24377A / ETEC), this protein is Flagellar protein FliT.